The following is a 579-amino-acid chain: Potassium-transporting ATPase potassium-binding subunit (579 aa).

10 helical membrane-spanning segments follow: residues 1–21 (MISNSVIQIGIFLVVLMACVV), 64–84 (HYALALLGFNAMGMLLLYGLQ), 135–155 (GLTVQNFVSAATGMAVLIGLI), 178–198 (IYILLPLALVLSVTLVSQGVV), 265–285 (FLELLSILLIPAALCYTFGLM), 293–313 (WAILATMTIILLGFTVLAVSA), 398–418 (GLYGMLIFAIIAVFVAGLMVG), 435–455 (MAALIILIPCVMTLLITAIAV), 503–523 (WLGIAMLVSRFWLIVPTLAIA), and 549–569 (LLIGVVLIVGALTFIPALALG).

The protein belongs to the KdpA family. In terms of assembly, the system is composed of three essential subunits: KdpA, KdpB and KdpC.

The protein localises to the cell membrane. In terms of biological role, part of the high-affinity ATP-driven potassium transport (or Kdp) system, which catalyzes the hydrolysis of ATP coupled with the electrogenic transport of potassium into the cytoplasm. This subunit binds the extracellular potassium ions and delivers the ions to the membrane domain of KdpB through an intramembrane tunnel. The protein is Potassium-transporting ATPase potassium-binding subunit of Herpetosiphon aurantiacus (strain ATCC 23779 / DSM 785 / 114-95).